Consider the following 127-residue polypeptide: Secreted RxLR effector protein 7 (127 aa).

Residues 1–21 form the signal peptide; sequence MRSAYYVLTALLVVASSQVAA. Residues 48-65 carry the RxLR-dEER motif; the sequence is RFLRESRDVHGNVANEER.

It belongs to the RxLR effector family.

The protein resides in the secreted. It localises to the host nucleus. The protein localises to the host cytoplasm. Secreted effector that completely suppresses the host cell death induced by cell death-inducing proteins. This Plasmopara viticola (Downy mildew of grapevine) protein is Secreted RxLR effector protein 7.